A 217-amino-acid chain; its full sequence is Zinc finger CCHC-type and RNA-binding motif-containing protein 1 (217 aa).

The RRM domain maps to 10–88 (STVYVSNLPF…RVIKASIAID (79 aa)). A CCHC-type zinc finger spans residues 105–122 (SKCYECGESGHLSYACPK). Positions 120 to 217 (CPKNMLGERE…YFSDEEELSD (98 aa)) are disordered. A compositionally biased stretch (acidic residues) spans 145 to 163 (PEEEIEEVEVSEEEGEDPA). Phosphoserine occurs at positions 155, 210, and 216.

Component of the U11/U12 snRNPs that are part of the U12-type spliceosome. Interacts with ZRSR1.

The protein resides in the nucleus. The protein localises to the nucleoplasm. This is Zinc finger CCHC-type and RNA-binding motif-containing protein 1 (Zcrb1) from Rattus norvegicus (Rat).